A 148-amino-acid polypeptide reads, in one-letter code: Sec-independent protein translocase protein TatB (148 aa).

Residues 1–21 (MFGISFSELLLVGLVALLVLG) form a helical membrane-spanning segment. The tract at residues 85–148 (EPTPVEHVGE…NDTTQPPRAP (64 aa)) is disordered. The segment covering 107–148 (APAVAPTESAPVVAPASVEHVAQTAAPTTPAPNDTTQPPRAP) has biased composition (low complexity).

Belongs to the TatB family. The Tat system comprises two distinct complexes: a TatABC complex, containing multiple copies of TatA, TatB and TatC subunits, and a separate TatA complex, containing only TatA subunits. Substrates initially bind to the TatABC complex, which probably triggers association of the separate TatA complex to form the active translocon.

It is found in the cell inner membrane. In terms of biological role, part of the twin-arginine translocation (Tat) system that transports large folded proteins containing a characteristic twin-arginine motif in their signal peptide across membranes. Together with TatC, TatB is part of a receptor directly interacting with Tat signal peptides. TatB may form an oligomeric binding site that transiently accommodates folded Tat precursor proteins before their translocation. The protein is Sec-independent protein translocase protein TatB of Pseudomonas fluorescens (strain Pf0-1).